A 1016-amino-acid chain; its full sequence is Coiled-coil domain-containing protein 57 (1016 aa).

Residues 1–503 (MLPLCSEREL…HGLLPGQEAQ (503 aa)) form a centrosomal targeting domain region. Coiled-coil stretches lie at residues 14–607 (LARK…PVKT), 676–700 (SEVD…KHLK), and 748–775 (VTHL…LLEM). 2 disordered regions span residues 500–519 (QEAQ…DSPS) and 549–573 (HLPP…DSTP). Residues 604–1016 (PVKTSVATAD…SRIRNYNLKD (413 aa)) form a microtubule binding domain region. 2 disordered regions span residues 781 to 921 (AEQG…LASS) and 933 to 1016 (GSSP…NLKD). 2 stretches are compositionally biased toward polar residues: residues 846–859 (QPHS…TNTP) and 934–945 (SSPSGVPSQDNS).

Interacts with CEP63; the interaction is required for their location to proximal end of centrioles. Interacts with microtubules.

It is found in the cytoplasm. The protein localises to the cytoskeleton. Its subcellular location is the microtubule organizing center. It localises to the centrosome. The protein resides in the centriolar satellite. It is found in the centriole. The protein localises to the spindle. Its function is as follows. Pleiotropic regulator of centriole duplication, mitosis, and ciliogenesis. Critical interface between centrosome and microtubule-mediated cellular processes. Centriole duplication protein required for recruitment of CEP63, CEP152, and PLK4 to the centrosome. Independent of its centrosomal targeting, localizes to and interacts with microtubules and regulates microtubule nucleation, stability, and mitotic progression. The sequence is that of Coiled-coil domain-containing protein 57 from Mus musculus (Mouse).